The following is a 204-amino-acid chain: Large ribosomal subunit protein uL4 (204 aa).

Positions 49 to 75 (TKGRSDVSGGGKKPWRQKGRGGARAGS) are disordered.

This sequence belongs to the universal ribosomal protein uL4 family. In terms of assembly, part of the 50S ribosomal subunit.

Its function is as follows. One of the primary rRNA binding proteins, this protein initially binds near the 5'-end of the 23S rRNA. It is important during the early stages of 50S assembly. It makes multiple contacts with different domains of the 23S rRNA in the assembled 50S subunit and ribosome. Functionally, forms part of the polypeptide exit tunnel. In Campylobacter jejuni (strain RM1221), this protein is Large ribosomal subunit protein uL4.